The chain runs to 308 residues: Phenylcoumaran benzylic ether reductase TP7 (308 aa).

NADP(+)-binding positions include 11–17 (GGTGYIG), Arg-36, and Lys-45. Catalysis depends on Lys-133, which acts as the Proton acceptor. Arg-137 provides a ligand contact to NADP(+).

Belongs to the NmrA-type oxidoreductase family. Isoflavone reductase subfamily. Expressed in flowers. Expressed at low levels in stems.

The enzyme catalyses (-)-dehydrodiconiferyl alcohol + NADPH + H(+) = (S)-isodihydrodehydrodiconiferyl alcohol + NADP(+). It catalyses the reaction (+)-dehydrodiconiferyl alcohol + NADPH + H(+) = (R)-isodihydrodehydrodiconiferyl alcohol + NADP(+). The catalysed reaction is (2R,3S)-dihydrodehydrodiconiferyl alcohol + NADPH + H(+) = (S)-tetrahydrodehydrodiconiferyl alcohol + NADP(+). It carries out the reaction (2S,3R)-dihydrodehydrodiconiferyl alcohol + NADPH + H(+) = (R)-tetrahydrodehydrodiconiferyl alcohol + NADP(+). Functionally, oxidoreductase involved in lignan biosynthesis. Catalyzes the NADPH-dependent reduction of phenylcoumaran benzylic ethers. Converts dehydrodiconiferyl alcohol (DDC) to isodihydrodehydrodiconiferyl alcohol (IDDDC), and dihydrodehydrodiconiferyl alcohol (DDDC) to tetrahydrodehydrodiconiferyl alcohol (TDDC). The protein is Phenylcoumaran benzylic ether reductase TP7 of Nicotiana tabacum (Common tobacco).